Here is an 859-residue protein sequence, read N- to C-terminus: Sulfate permease 1 (859 aa).

N-linked (GlcNAc...) asparagine glycans are attached at residues Asn-51 and Asn-93. Helical transmembrane passes span 94–114 (LTAK…KWFP), 116–136 (YNFT…CVLV), 148–168 (LSPE…SLFA), 173–193 (VCIG…AEVL), 206–226 (PIIA…LGIL), 234–254 (LISL…IIWG), 292–312 (FGLI…TFGI), and 332–352 (FYFY…TAIS). N-linked (GlcNAc...) asparagine glycosylation is found at Asn-358 and Asn-391. The next 4 membrane-spanning stretches (helical) occupy residues 395 to 415 (EIPA…KSFG), 428 to 448 (LIAI…PATG), 468 to 488 (VFTG…FFFI), and 525 to 545 (FIVT…YFAM). Residues Asn-630, Asn-653, and Asn-718 are each glycosylated (N-linked (GlcNAc...) asparagine). The region spanning 630-808 (NTTVRPPPPG…SIIAGHSSFH (179 aa)) is the STAS domain.

The protein belongs to the SLC26A/SulP transporter (TC 2.A.53) family.

Its subcellular location is the membrane. Its function is as follows. High affinity uptake of sulfate into the cell. The chain is Sulfate permease 1 (SUL1) from Saccharomyces cerevisiae (strain ATCC 204508 / S288c) (Baker's yeast).